The primary structure comprises 515 residues: Bifunctional purine biosynthesis protein PurH (515 aa).

In terms of domain architecture, MGS-like spans 1 to 145; the sequence is MTKRVLISVS…KNHASVTVVV (145 aa).

The protein belongs to the PurH family.

The enzyme catalyses (6R)-10-formyltetrahydrofolate + 5-amino-1-(5-phospho-beta-D-ribosyl)imidazole-4-carboxamide = 5-formamido-1-(5-phospho-D-ribosyl)imidazole-4-carboxamide + (6S)-5,6,7,8-tetrahydrofolate. It catalyses the reaction IMP + H2O = 5-formamido-1-(5-phospho-D-ribosyl)imidazole-4-carboxamide. It functions in the pathway purine metabolism; IMP biosynthesis via de novo pathway; 5-formamido-1-(5-phospho-D-ribosyl)imidazole-4-carboxamide from 5-amino-1-(5-phospho-D-ribosyl)imidazole-4-carboxamide (10-formyl THF route): step 1/1. It participates in purine metabolism; IMP biosynthesis via de novo pathway; IMP from 5-formamido-1-(5-phospho-D-ribosyl)imidazole-4-carboxamide: step 1/1. The sequence is that of Bifunctional purine biosynthesis protein PurH from Streptococcus pneumoniae (strain Taiwan19F-14).